We begin with the raw amino-acid sequence, 722 residues long: DUF724 domain-containing protein 7 (722 aa).

Positions 424–449 are disordered; it reads KTTPKKKLQAMKNQKSSTNDSVGEKV. Polar residues predominate over residues 434 to 444; sequence MKNQKSSTNDS. The DUF724 domain maps to 540 to 720; the sequence is VLPFVKKSQL…HEFQAILAAP (181 aa). A coiled-coil region spans residues 645–712; the sequence is CALEELKAVE…DQEVQNVDHE (68 aa).

As to quaternary structure, homodimer. Interacts wtih ABAP1, ARIA and LHP1. Interacts with the non-modified histones H1, H2B, H3 and H4. In terms of tissue distribution, expressed in roots, leaves, stems and flowers.

It localises to the nucleus. Its function is as follows. May act as a link between DNA replication, transcription and chromatin remodeling during flower development. May participate in the repression of LHP1-targeted genes during flower development by direct interaction with LHP1. May be involved in the polar growth of plant cells via transportation of RNAs. This Arabidopsis thaliana (Mouse-ear cress) protein is DUF724 domain-containing protein 7.